Reading from the N-terminus, the 319-residue chain is Acetyl-coenzyme A carboxylase carboxyl transferase subunit alpha (319 aa).

Residues 35–296 (NLDEEVQRLR…KAQLLADLSD (262 aa)) enclose the CoA carboxyltransferase C-terminal domain.

This sequence belongs to the AccA family. In terms of assembly, acetyl-CoA carboxylase is a heterohexamer composed of biotin carboxyl carrier protein (AccB), biotin carboxylase (AccC) and two subunits each of ACCase subunit alpha (AccA) and ACCase subunit beta (AccD).

The protein resides in the cytoplasm. It catalyses the reaction N(6)-carboxybiotinyl-L-lysyl-[protein] + acetyl-CoA = N(6)-biotinyl-L-lysyl-[protein] + malonyl-CoA. The protein operates within lipid metabolism; malonyl-CoA biosynthesis; malonyl-CoA from acetyl-CoA: step 1/1. Component of the acetyl coenzyme A carboxylase (ACC) complex. First, biotin carboxylase catalyzes the carboxylation of biotin on its carrier protein (BCCP) and then the CO(2) group is transferred by the carboxyltransferase to acetyl-CoA to form malonyl-CoA. This Yersinia enterocolitica serotype O:8 / biotype 1B (strain NCTC 13174 / 8081) protein is Acetyl-coenzyme A carboxylase carboxyl transferase subunit alpha.